The chain runs to 249 residues: 5'-nucleotidase SurE (249 aa).

A divalent metal cation-binding residues include D8, D9, S39, and N91.

It belongs to the SurE nucleotidase family. A divalent metal cation serves as cofactor.

It is found in the cytoplasm. It catalyses the reaction a ribonucleoside 5'-phosphate + H2O = a ribonucleoside + phosphate. Nucleotidase that shows phosphatase activity on nucleoside 5'-monophosphates. The protein is 5'-nucleotidase SurE of Magnetococcus marinus (strain ATCC BAA-1437 / JCM 17883 / MC-1).